A 213-amino-acid polypeptide reads, in one-letter code: Orotate phosphoribosyltransferase (213 aa).

Lysine 26 contacts 5-phospho-alpha-D-ribose 1-diphosphate. An orotate-binding site is contributed by 34 to 35 (FF). Residues 72-73 (YK), arginine 99, lysine 100, lysine 103, histidine 105, and 124-132 (DDVITAGTA) each bind 5-phospho-alpha-D-ribose 1-diphosphate. The orotate site is built by threonine 128 and arginine 156.

Belongs to the purine/pyrimidine phosphoribosyltransferase family. PyrE subfamily. In terms of assembly, homodimer. Requires Mg(2+) as cofactor.

It carries out the reaction orotidine 5'-phosphate + diphosphate = orotate + 5-phospho-alpha-D-ribose 1-diphosphate. The protein operates within pyrimidine metabolism; UMP biosynthesis via de novo pathway; UMP from orotate: step 1/2. Its function is as follows. Catalyzes the transfer of a ribosyl phosphate group from 5-phosphoribose 1-diphosphate to orotate, leading to the formation of orotidine monophosphate (OMP). In Salmonella arizonae (strain ATCC BAA-731 / CDC346-86 / RSK2980), this protein is Orotate phosphoribosyltransferase.